Reading from the N-terminus, the 795-residue chain is Histidine biosynthesis trifunctional protein (795 aa).

The segment at 1–225 (MLPVVPVFNA…VVRQGGSGSF (225 aa)) is phosphoribosyl-AMP cyclohydrolase. The interval 226-308 (CHLETESCFG…FYFAMARLVA (83 aa)) is phosphoribosyl-ATP pyrophosphohydrolase. The histidinol dehydrogenase stretch occupies residues 309–795 (NGVSLEDVER…KLGLLPSGFE (487 aa)). Zn(2+) is bound by residues Gln-614 and His-617. Catalysis depends on residues Glu-683 and His-684. 2 residues coordinate Zn(2+): Asp-717 and His-776.

This sequence in the C-terminal section; belongs to the histidinol dehydrogenase family. The cofactor is Zn(2+).

The catalysed reaction is 1-(5-phospho-beta-D-ribosyl)-5'-AMP + H2O = 1-(5-phospho-beta-D-ribosyl)-5-[(5-phospho-beta-D-ribosylamino)methylideneamino]imidazole-4-carboxamide. The enzyme catalyses 1-(5-phospho-beta-D-ribosyl)-ATP + H2O = 1-(5-phospho-beta-D-ribosyl)-5'-AMP + diphosphate + H(+). It catalyses the reaction L-histidinol + 2 NAD(+) + H2O = L-histidine + 2 NADH + 3 H(+). Its pathway is amino-acid biosynthesis; L-histidine biosynthesis; L-histidine from 5-phospho-alpha-D-ribose 1-diphosphate: step 2/9. It functions in the pathway amino-acid biosynthesis; L-histidine biosynthesis; L-histidine from 5-phospho-alpha-D-ribose 1-diphosphate: step 3/9. The protein operates within amino-acid biosynthesis; L-histidine biosynthesis; L-histidine from 5-phospho-alpha-D-ribose 1-diphosphate: step 9/9. In Kluyveromyces lactis (strain ATCC 8585 / CBS 2359 / DSM 70799 / NBRC 1267 / NRRL Y-1140 / WM37) (Yeast), this protein is Histidine biosynthesis trifunctional protein (HIS4).